We begin with the raw amino-acid sequence, 264 residues long: tRNA (guanine-N(1)-)-methyltransferase (264 aa).

S-adenosyl-L-methionine-binding positions include Gly-125 and 145 to 150 (LGDFVL).

Belongs to the RNA methyltransferase TrmD family. In terms of assembly, homodimer.

It localises to the cytoplasm. It carries out the reaction guanosine(37) in tRNA + S-adenosyl-L-methionine = N(1)-methylguanosine(37) in tRNA + S-adenosyl-L-homocysteine + H(+). Specifically methylates guanosine-37 in various tRNAs. This is tRNA (guanine-N(1)-)-methyltransferase from Burkholderia multivorans (strain ATCC 17616 / 249).